Reading from the N-terminus, the 524-residue chain is GMP synthase [glutamine-hydrolyzing] (524 aa).

Positions 9–207 constitute a Glutamine amidotransferase type-1 domain; that stretch reads RILILDFGSQ…VIHICQCIPN (199 aa). Residue C86 is the Nucleophile of the active site. Catalysis depends on residues H181 and E183. One can recognise a GMPS ATP-PPase domain in the interval 208–399; it reads WTTKHIIEDS…LGLPADLIYR (192 aa). 235-241 is a binding site for ATP; the sequence is SGGVDSA.

As to quaternary structure, homodimer.

The catalysed reaction is XMP + L-glutamine + ATP + H2O = GMP + L-glutamate + AMP + diphosphate + 2 H(+). It participates in purine metabolism; GMP biosynthesis; GMP from XMP (L-Gln route): step 1/1. In terms of biological role, catalyzes the synthesis of GMP from XMP. The chain is GMP synthase [glutamine-hydrolyzing] from Coxiella burnetii (strain RSA 493 / Nine Mile phase I).